The primary structure comprises 328 residues: D-cysteine desulfhydrase (328 aa).

N6-(pyridoxal phosphate)lysine is present on lysine 51.

The protein belongs to the ACC deaminase/D-cysteine desulfhydrase family. As to quaternary structure, homodimer. Pyridoxal 5'-phosphate is required as a cofactor.

The enzyme catalyses D-cysteine + H2O = hydrogen sulfide + pyruvate + NH4(+) + H(+). In terms of biological role, catalyzes the alpha,beta-elimination reaction of D-cysteine and of several D-cysteine derivatives. It could be a defense mechanism against D-cysteine. In Klebsiella pneumoniae (strain 342), this protein is D-cysteine desulfhydrase.